The following is a 770-amino-acid chain: MASLVYRQLLANSYTSDLQDTIDDISAQKTENVTVNPGPFAQTGYALVEWTHGDITTDETVQQTLDGPYAPSSVIIQPQYWVLMNPETADVIAEADATNKKYACVMLAPNTEEGDKQYTILGRQITINLGNTDQNRYKFFDLASENGETYSKIQELLTPNRLNAFMKDQGRLYVYHGTVPNISTGYYTLDDIANVQTNIKCNYYIVPKSQTQQLEDFLKNGLPPIQESRYIMPVERSVQNIYRAKPNEDIVISKTSLWKEMQYNRDIVIRFKFGNTIIKSGGLGYKWSEISYKPMNYEYTYERDGETVVAHTTCSVAGVNDFGYNSGSLPTDFVVSKYEVLKGNSYVYIDYWDDSQAFKNMVYVRSLSAEFNAINCTGGTYDFQLPVGQWPQMRGGNVTLNSDAVTLSTQYTDFVSLNSLRFRFKPAIGEPFFEITRTRETRLYGLPASNPMGGNEYYETAGRFSLISLVPSNDDYQTPIQNSTTVRQDLEQQISDLREEFNQLSSEIAMSQLIDLALLPLDMFSMFSGIKSTIDAVKSVTTSVMKKMKTSTLAKSVSTITEELSDAATSVSRASSIRSNASVWNNLVDTRTQTSVATNDIATQTSRIASKLRVKEFATQTEGGLSFNDISAAVLKTKIDKIETVQPKILPTIITESVDKFIPTRQYRIIDKDIAYEISNSGKYFAYRVDTFEEVIFDVEKFADLVTDSPVISAIIDFKTLKNLNDNFGITKEQAYNLLRSDPRVLKDFINQNNPIIRNRIEQLILQCRI.

The interval 65–222 is spike head; that stretch reads LDGPYAPSSV…QLEDFLKNGL (158 aa). A spike body and stalk (antigen domain) region spans residues 244–475; the sequence is AKPNEDIVIS…LISLVPSNDD (232 aa). A DGE motif; interaction with ITGA2/ITGB1 heterodimer motif is present at residues 304-306; that stretch reads DGE. C314 and C376 are disulfide-bonded. The segment at 385–405 is hydrophobic; possible role in virus entry into host cell; sequence LPVGQWPQMRGGNVTLNSDAV. A YGL motif; interaction with ITGA4 motif is present at residues 444–446; sequence YGL. A coiled-coil region spans residues 480–507; the sequence is IQNSTTVRQDLEQQISDLREEFNQLSSE. Residues 506-770 form a spike foot region; that stretch reads SEIAMSQLID…IEQLILQCRI (265 aa). Residues 638-640 carry the KID motif; interaction with HSPA8 motif; the sequence is KID.

It belongs to the rotavirus VP4 family. In terms of assembly, homotrimer. VP4 adopts a dimeric appearance above the capsid surface, while forming a trimeric base anchored inside the capsid layer. Only hints of the third molecule are observed above the capsid surface. It probably performs a series of molecular rearrangements during viral entry. Prior to trypsin cleavage, it is flexible. The priming trypsin cleavage triggers its rearrangement into rigid spikes with approximate two-fold symmetry of their protruding parts. After an unknown second triggering event, cleaved VP4 may undergo another rearrangement, in which two VP5* subunits fold back on themselves and join a third subunit to form a tightly associated trimer, shaped like a folded umbrella. Interacts with VP6. Interacts with VP7. Homotrimer. The trimer is coiled-coil stabilized by its C-terminus, however, its N-terminus, known as antigen domain or 'body', seems to be flexible allowing it to self-associate either as a dimer or a trimer. Proteolytic cleavage by trypsin results in activation of VP4 functions and greatly increases infectivity. The penetration into the host cell is dependent on trypsin treatment of VP4. It produces two peptides, VP5* and VP8* that remain associated with the virion. Cleavage of VP4 by trypsin probably occurs in vivo in the lumen of the intestine prior to infection of enterocytes. Trypsin seems to be incorporated into the three-layered viral particles but remains inactive as long as the viral outer capsid is intact and would only be activated upon the solubilization of the latter.

The protein localises to the virion. The protein resides in the host rough endoplasmic reticulum. Its subcellular location is the host cell membrane. It localises to the host cytoplasm. It is found in the host cytoskeleton. The protein localises to the host endoplasmic reticulum-Golgi intermediate compartment. Its function is as follows. Spike-forming protein that mediates virion attachment to the host epithelial cell receptors and plays a major role in cell penetration, determination of host range restriction and virulence. Rotavirus attachment and entry into the host cell probably involves multiple sequential contacts between the outer capsid proteins VP4 and VP7, and the cell receptors. It is subsequently lost, together with VP7, following virus entry into the host cell. Following entry into the host cell, low intracellular or intravesicular Ca(2+) concentration probably causes the calcium-stabilized VP7 trimers to dissociate from the virion. This step is probably necessary for the membrane-disrupting entry step and the release of VP4, which is locked onto the virion by VP7. During the virus exit from the host cell, VP4 seems to be required to target the newly formed virions to the host cell lipid rafts. Functionally, forms the spike 'foot' and 'body' and acts as a membrane permeabilization protein that mediates release of viral particles from endosomal compartments into the cytoplasm. During entry, the part of VP5* that protrudes from the virus folds back on itself and reorganizes from a local dimer to a trimer. This reorganization may be linked to membrane penetration by exposing VP5* hydrophobic region. In integrin-dependent strains, VP5* targets the integrin heterodimer ITGA2/ITGB1 for cell attachment. In terms of biological role, forms the head of the spikes and mediates the recognition of specific host cell surface glycans. It is the viral hemagglutinin and an important target of neutralizing antibodies. In sialic acid-dependent strains, VP8* binds to host cell sialic acid, most probably a ganglioside, providing the initial contact. In some other strains, VP8* mediates the attachment to histo-blood group antigens (HBGAs) for viral entry. This Bos taurus (Bovine) protein is Outer capsid protein VP4.